The chain runs to 183 residues: Dual-action ribosomal maturation protein DarP (183 aa).

This sequence belongs to the DarP family.

The protein resides in the cytoplasm. Its function is as follows. Member of a network of 50S ribosomal subunit biogenesis factors which assembles along the 30S-50S interface, preventing incorrect 23S rRNA structures from forming. Promotes peptidyl transferase center (PTC) maturation. This Salmonella paratyphi A (strain ATCC 9150 / SARB42) protein is Dual-action ribosomal maturation protein DarP.